Consider the following 234-residue polypeptide: Nuclear transcription factor Y subunit B-6 (234 aa).

2 disordered regions span residues 1–21 (MERG…TPSP) and 35–55 (MRPP…EECT). A DNA-binding region spans residues 63-69 (MPIANVI). Positions 90-101 (IQECVSEYISFI) are subunit association domain (SAD). The tract at residues 206–234 (NEPNSKMSGSSSGASGARVEVFPTQQHKY) is disordered. Residues 213–222 (SGSSSGASGA) are compositionally biased toward low complexity.

Belongs to the NFYB/HAP3 subunit family. As to quaternary structure, heterotrimeric transcription factor composed of three components, NF-YA, NF-YB and NF-YC. NF-YB and NF-YC must interact and dimerize for NF-YA association and DNA binding. Interacts with PRN1. Binds directly with DPB3-1. Expressed in roots, flowers and developing siliques. Present in etiolated seedlings.

The protein resides in the nucleus. Its function is as follows. Component of the NF-Y/HAP transcription factor complex. The NF-Y complex stimulates the transcription of various genes by recognizing and binding to a CCAAT motif in promoters. Plays a role in the regulation of the embryogenesis. Involved in the abscisic acid (ABA) signaling pathway. This is Nuclear transcription factor Y subunit B-6 from Arabidopsis thaliana (Mouse-ear cress).